We begin with the raw amino-acid sequence, 321 residues long: MFSSKKSLLLFKNVRYMSTSSSKTVGFIGLGNMGGHQAINLIKKGHNLIVFDMSKDNMNRLKEKGAKIANSPAEVAKEADVIVTMLPASAHVKNVYCGENGIFQTVRPGTLLLDSSTIDPATAREVASIAKKHQSTMLDCPVSGGTGGAEAGTLTFMVGGSEQDFNTAKTYLECMGKNIVHCGDVGTGQVAKVCNNLVLGISMIAVSEAMNLGVKQGMDPKKLAGIFNTSSARCWTSELYNPCPGVIETSPASRGYTGGFGSALMTKDLGLAVDSAKSIGEPLLLGNSAHQLYTLLVAKGDGQKDFSVVYDFLNKNFKNSN.

Residues 23-52 (KTVG…IVFD), 86-87 (LP), and T117 each bind NAD(+). K192 is a catalytic residue. An NAD(+)-binding site is contributed by K267.

This sequence belongs to the HIBADH-related family. 3-hydroxyisobutyrate dehydrogenase subfamily.

The protein resides in the mitochondrion. It catalyses the reaction 3-hydroxy-2-methylpropanoate + NAD(+) = 2-methyl-3-oxopropanoate + NADH + H(+). It participates in amino-acid degradation; L-valine degradation. In Dictyostelium discoideum (Social amoeba), this protein is Probable 3-hydroxyisobutyrate dehydrogenase, mitochondrial (hibA).